Reading from the N-terminus, the 337-residue chain is Nucleoid-associated protein PBPRA2585 (337 aa).

Belongs to the YejK family.

The protein localises to the cytoplasm. It is found in the nucleoid. This is Nucleoid-associated protein PBPRA2585 from Photobacterium profundum (strain SS9).